Reading from the N-terminus, the 253-residue chain is Tryptophan synthase alpha chain (253 aa).

Active-site proton acceptor residues include E45 and D56.

It belongs to the TrpA family. In terms of assembly, tetramer of two alpha and two beta chains.

It catalyses the reaction (1S,2R)-1-C-(indol-3-yl)glycerol 3-phosphate + L-serine = D-glyceraldehyde 3-phosphate + L-tryptophan + H2O. It functions in the pathway amino-acid biosynthesis; L-tryptophan biosynthesis; L-tryptophan from chorismate: step 5/5. Functionally, the alpha subunit is responsible for the aldol cleavage of indoleglycerol phosphate to indole and glyceraldehyde 3-phosphate. The chain is Tryptophan synthase alpha chain from Flavobacterium johnsoniae (strain ATCC 17061 / DSM 2064 / JCM 8514 / BCRC 14874 / CCUG 350202 / NBRC 14942 / NCIMB 11054 / UW101) (Cytophaga johnsonae).